Consider the following 170-residue polypeptide: Peptide deformylase (170 aa).

Positions 91 and 133 each coordinate Fe cation. E134 is an active-site residue. Residue H137 coordinates Fe cation.

Belongs to the polypeptide deformylase family. Fe(2+) serves as cofactor.

The enzyme catalyses N-terminal N-formyl-L-methionyl-[peptide] + H2O = N-terminal L-methionyl-[peptide] + formate. Functionally, removes the formyl group from the N-terminal Met of newly synthesized proteins. Requires at least a dipeptide for an efficient rate of reaction. N-terminal L-methionine is a prerequisite for activity but the enzyme has broad specificity at other positions. This Actinobacillus pleuropneumoniae serotype 7 (strain AP76) protein is Peptide deformylase.